Consider the following 91-residue polypeptide: Small ribosomal subunit protein uS19 (91 aa).

This sequence belongs to the universal ribosomal protein uS19 family.

Its function is as follows. Protein S19 forms a complex with S13 that binds strongly to the 16S ribosomal RNA. This chain is Small ribosomal subunit protein uS19, found in Hahella chejuensis (strain KCTC 2396).